A 373-amino-acid chain; its full sequence is MDLEKYIFMYAKKVNLLNMNKEELLIFFDKLGEKPFRSHQIMRWIYHYYCDDFNYMTNISKSLKERLKQIAEIRAPIIIKEQLSSDGTIKWAMKIDEQQIETVYIPENKRTTLCVSSQIGCPLGCSFCGTAQQGFNRNLNVSEIIGQVWRAAQLINLNKKIKIKNNRFPITNIVFMGMGEPLLNIVNVVSAIRIILDDFGFKLSKRHITLSTAGIVPGIEKLKNMIDIPLAISLHAPNDIIRNKIMPINKKYNINSVLEAARRYSMDTKSNHGRITIEYVLLKNINDDVLHAHQLAKQLQGIPCKINLIPWNPIPNIRYACSSQIRMRAFLKVLLKYNIVTIIRKIRGADINAACGQLTGEVINRINLQYNSL.

Residue E101 is the Proton acceptor of the active site. One can recognise a Radical SAM core domain in the interval 107–350 (ENKRTTLCVS…TIIRKIRGAD (244 aa)). C114 and C355 are joined by a disulfide. [4Fe-4S] cluster contacts are provided by C121, C125, and C128. S-adenosyl-L-methionine contacts are provided by residues 179–180 (GE), S211, 233–235 (SLH), and N312. C355 (S-methylcysteine intermediate) is an active-site residue.

It belongs to the radical SAM superfamily. RlmN family. [4Fe-4S] cluster is required as a cofactor.

The protein resides in the cytoplasm. It carries out the reaction adenosine(2503) in 23S rRNA + 2 reduced [2Fe-2S]-[ferredoxin] + 2 S-adenosyl-L-methionine = 2-methyladenosine(2503) in 23S rRNA + 5'-deoxyadenosine + L-methionine + 2 oxidized [2Fe-2S]-[ferredoxin] + S-adenosyl-L-homocysteine. The catalysed reaction is adenosine(37) in tRNA + 2 reduced [2Fe-2S]-[ferredoxin] + 2 S-adenosyl-L-methionine = 2-methyladenosine(37) in tRNA + 5'-deoxyadenosine + L-methionine + 2 oxidized [2Fe-2S]-[ferredoxin] + S-adenosyl-L-homocysteine. Functionally, specifically methylates position 2 of adenine 2503 in 23S rRNA and position 2 of adenine 37 in tRNAs. m2A2503 modification seems to play a crucial role in the proofreading step occurring at the peptidyl transferase center and thus would serve to optimize ribosomal fidelity. This chain is Dual-specificity RNA methyltransferase RlmN, found in Blochmanniella pennsylvanica (strain BPEN).